We begin with the raw amino-acid sequence, 510 residues long: Anaerobic nitric oxide reductase transcription regulator NorR (510 aa).

The region spanning 188 to 417 is the Sigma-54 factor interaction domain; sequence IIGNSQGMRT…LEHVIKRAAV (230 aa). Residues 216–223 and 279–288 contribute to the ATP site; these read GETGVGKE and ADGGTLFLDE. Residues 486 to 505 constitute a DNA-binding region (H-T-H motif); sequence WAATARQLELDSGNLHRLAK.

It functions in the pathway nitrogen metabolism; nitric oxide reduction. Its function is as follows. Required for the expression of anaerobic nitric oxide (NO) reductase, acts as a transcriptional activator for at least the norVW operon. Activation also requires sigma-54. This is Anaerobic nitric oxide reductase transcription regulator NorR from Vibrio vulnificus (strain YJ016).